The following is an 801-amino-acid chain: PR domain zinc finger protein 4 (801 aa).

Residues 412 to 529 form the SET domain; the sequence is KQLVLRQSIV…PENELLFYYS (118 aa). The C2H2-type 1; atypical zinc-finger motif lies at 545 to 566; the sequence is HLCNCGKECNSYTEFKAHLTSH. C2H2-type zinc fingers lie at residues 618–640, 646–668, 674–696, and 702–724; these read HKCD…LKIH, YRCT…MVIH, LKCD…VLIH, and IKCP…LNSH. The segment at 730 to 752 adopts a C2H2-type 6; atypical zinc-finger fold; sequence YVCEKCTKAYLTKYHLTRHLKTC. Positions 751–782 are disordered; sequence TCKGPTSSSSAPEEEEEDDSEEEDLADSVGTE. Acidic residues predominate over residues 762-776; that stretch reads PEEEEEDDSEEEDLA.

It belongs to the class V-like SAM-binding methyltransferase superfamily. Expressed in many tissues. Highly expressed in ovary, testis, pancreas, brain, heart and prostate.

The protein localises to the nucleus. May function as a transcription factor involved in cell differentiation. The protein is PR domain zinc finger protein 4 (PRDM4) of Homo sapiens (Human).